The sequence spans 655 residues: Probable inactive receptor kinase At1g48480 (655 aa).

Positions 1-32 (MRVFFFPNSSMAILSVFLSLLLLSLPLPSTQD) are cleaved as a signal peptide. 6 LRR repeats span residues 71-95 (SNRV…IFGN), 98-120 (QLRT…LSTS), 122-144 (NLRH…LFSL), 146-169 (HLVR…TNLT), 170-192 (KLKT…DLPL), and 194-215 (QFNV…RFES). The segment at 234–260 (EETVPSQPTSGGNRTPPSVEGSEEKKK) is disordered. Polar residues predominate over residues 237-249 (VPSQPTSGGNRTP). Residues 269 to 289 (IAGIVIGCVVGFALIVLILMV) form a helical membrane-spanning segment. Residues 371 to 646 (RASAEVLGKG…RKMENLRPYS (276 aa)) enclose the Protein kinase domain. Serine 373 carries the phosphoserine modification. 377–385 (LGKGTFGTA) contributes to the ATP binding site. A Phosphothreonine modification is found at threonine 394. Lysine 399 contacts ATP. Serine 450 bears the Phosphoserine mark. A Phosphothreonine modification is found at threonine 526. Serine 546 carries the post-translational modification Phosphoserine. Phosphothreonine is present on threonine 622.

The protein belongs to the protein kinase superfamily. In terms of tissue distribution, highly expressed in seedlings and leaves. Lower expression in roots, stems, flowers and siliques. Detected in the vascular tissues of roots, in the trichomes of young rosettes leaves and hydathodes, in the floral abscission zones, in filament apex and stomata cells of anthers, in inflorescence stems and in sepals.

It localises to the cell membrane. In Arabidopsis thaliana (Mouse-ear cress), this protein is Probable inactive receptor kinase At1g48480 (RKL1).